The primary structure comprises 368 residues: Flagellar P-ring protein (368 aa).

An N-terminal signal peptide occupies residues 1–24; it reads MDKPMKRIFVVLVILLVLPQLALA.

The protein belongs to the FlgI family. As to quaternary structure, the basal body constitutes a major portion of the flagellar organelle and consists of four rings (L,P,S, and M) mounted on a central rod.

The protein resides in the periplasm. It localises to the bacterial flagellum basal body. Assembles around the rod to form the L-ring and probably protects the motor/basal body from shearing forces during rotation. The chain is Flagellar P-ring protein from Geobacter sulfurreducens (strain ATCC 51573 / DSM 12127 / PCA).